The primary structure comprises 209 residues: 60S ribosomal subunit assembly/export protein loc-1 (209 aa).

Disordered stretches follow at residues 1-53 (MAPT…SKGR) and 135-209 (REAR…AAPE). 2 stretches are compositionally biased toward basic and acidic residues: residues 20-33 (GSKDAERSRNDGVL) and 135-159 (REARRAEAEKKEAERKARLEETKDS). A coiled-coil region spans residues 126-170 (IKARQMEEIREARRAEAEKKEAERKARLEETKDSLRKKRKRSKQS).

This sequence belongs to the LOC1 family. In terms of assembly, component of the 66S pre-ribosomal particle.

It localises to the nucleus. It is found in the nucleolus. Its function is as follows. Required for efficient assembly and nuclear export of the 60S ribosomal subunit. This chain is 60S ribosomal subunit assembly/export protein loc-1 (loc-1), found in Neurospora crassa (strain ATCC 24698 / 74-OR23-1A / CBS 708.71 / DSM 1257 / FGSC 987).